The primary structure comprises 836 residues: General negative regulator of transcription subunit 3 (836 aa).

Coiled coils occupy residues 36–68 (NNPSQKDKLESDLKREVKKLQRLREQIKSWQSS), 119–195 (RERR…ANEE), and 255–292 (NTSDANESLQDISKLSKKEQRKLEREAKKAAKLAAKNA). The segment covering 252-267 (EDNNTSDANESLQDIS) has biased composition (polar residues). Disordered stretches follow at residues 252–284 (EDNNTSDANESLQDISKLSKKEQRKLEREAKKA), 296–391 (AIPV…LKPA), 410–471 (AVEK…NTGA), and 513–532 (NPKSEHEVATTVNQNGPENT). The segment covering 268 to 283 (KLSKKEQRKLEREAKK) has biased composition (basic and acidic residues). Serine 303, serine 307, and serine 322 each carry phosphoserine. Over residues 341–386 (SIKSPRSSADNLLPSLQKSPSSATPETPTNVHTHIHQTPNGITGAT) the composition is skewed to polar residues. A compositionally biased stretch (low complexity) spans 418–446 (TSASSTISNTSTKTPTTAAATTTSSNANS). 2 positions are modified to phosphoserine: serine 446 and serine 450. Composition is skewed to polar residues over residues 447–468 (RIGSALNTPKLSTSSLSLQPDN) and 522–531 (TTVNQNGPEN). Residue lysine 535 forms a Glycyl lysine isopeptide (Lys-Gly) (interchain with G-Cter in ubiquitin) linkage. Residues 537–583 (MEQKEEESPEERNKLQVPTFGVFDDDFESDRDSETEPEEEEQPSTPK) form a disordered region. Positions 559 to 578 (FDDDFESDRDSETEPEEEEQ) are enriched in acidic residues. A phosphoserine mark is found at serine 565 and serine 569. At threonine 571 the chain carries Phosphothreonine. A Phosphoserine modification is found at serine 657. Residues 803-831 (NVNDQSNVTLEQQKQEISHGKQLLKQLKQ) adopt a coiled-coil conformation.

Belongs to the CNOT2/3/5 family. Forms a NOT protein complex that comprises NOT1, NOT2, NOT3, NOT4 and NOT5. Subunit of the 1.0 MDa CCR4-NOT core complex that contains CCR4, CAF1, NOT1, NOT2, NOT3, NOT4, NOT5, CAF40 and CAF130. The core complex probably is part of a less characterized 1.9 MDa CCR4-NOT complex.

The protein localises to the cytoplasm. The protein resides in the nucleus. In terms of biological role, acts as a component of the CCR4-NOT core complex, which in the nucleus seems to be a general transcription factor, and in the cytoplasm the major mRNA deadenylase involved in mRNA turnover. The NOT protein subcomplex negatively regulates the basal and activated transcription of many genes. Preferentially affects TC-type TATA element-dependent transcription. Could directly or indirectly inhibit component(s) of the general transcription machinery. This chain is General negative regulator of transcription subunit 3 (NOT3), found in Saccharomyces cerevisiae (strain ATCC 204508 / S288c) (Baker's yeast).